The chain runs to 283 residues: Probable endonuclease 4 (283 aa).

Zn(2+)-binding residues include histidine 69, histidine 109, glutamate 145, aspartate 179, histidine 182, histidine 216, aspartate 229, histidine 231, and glutamate 261.

The protein belongs to the AP endonuclease 2 family. It depends on Zn(2+) as a cofactor.

The enzyme catalyses Endonucleolytic cleavage to 5'-phosphooligonucleotide end-products.. Endonuclease IV plays a role in DNA repair. It cleaves phosphodiester bonds at apurinic or apyrimidinic (AP) sites, generating a 3'-hydroxyl group and a 5'-terminal sugar phosphate. The polypeptide is Probable endonuclease 4 (Prosthecochloris aestuarii (strain DSM 271 / SK 413)).